The sequence spans 535 residues: Interferon lambda receptor 1 (535 aa).

The signal sequence occupies residues Met-1 to Gly-20. Residues Arg-21–Ala-227 lie on the Extracellular side of the membrane. The Fibronectin type-III domain occupies Pro-26–Asp-121. Residues Asn-29, Asn-36, and Asn-52 are each glycosylated (N-linked (GlcNAc...) asparagine). Cystine bridges form between Cys-73/Cys-81, Cys-85/Cys-149, and Cys-194/Cys-216. An N-linked (GlcNAc...) asparagine glycan is attached at Asn-141. A helical transmembrane segment spans residues Val-228–Trp-248. Residues Lys-249 to Arg-535 lie on the Cytoplasmic side of the membrane. Disordered stretches follow at residues Asn-301 to Gly-419 and Val-478 to Gln-520. Residues Ser-321–Asp-336 show a composition bias toward acidic residues. Over residues Glu-350–Thr-360 the composition is skewed to basic and acidic residues. The segment covering Gly-376 to Ser-396 has biased composition (low complexity). Residues Ser-397–Asp-414 are compositionally biased toward basic and acidic residues. Residues Glu-482–Glu-503 are compositionally biased toward acidic residues.

The protein belongs to the type II cytokine receptor family. Heterodimer with IL10RB. Post-translationally, ubiquitinated by FBXO45-containing E3 ligase leading to proteasomal degradation.

The protein resides in the membrane. Functionally, the IFNLR1/IL10RB dimer is a receptor for the cytokine ligands IFNL2 and IFNL3 and mediates their antiviral activity. The ligand/receptor complex stimulate the activation of the JAK/STAT signaling pathway leading to the expression of IFN-stimulated genes (ISG), which contribute to the antiviral state. Determines the cell type specificity of the lambda interferon action. Shows a more restricted pattern of expression in the epithelial tissues thereby limiting responses to lambda interferons primarily to epithelial cells of the respiratory, gastrointestinal, and reproductive tracts. Seems not to be essential for early virus-activated host defense in vaginal infection, but plays an important role in Toll-like receptor (TLR)-induced antiviral defense. Plays a significant role in the antiviral immune defense in the intestinal epithelium. This is Interferon lambda receptor 1 (Ifnlr1) from Mus musculus (Mouse).